Here is a 441-residue protein sequence, read N- to C-terminus: EMI domain-containing protein 1 (441 aa).

The signal sequence occupies residues 1–22 (MGGPRAWALLCLGLLLPGGGAA). The EMI domain occupies 33-106 (RRNWCSYVVT…PGHSGVSCEE (74 aa)). 3 cysteine pairs are disulfide-bonded: Cys37/Cys96, Cys62/Cys68, and Cys95/Cys104. The O-linked (Fuc) threonine glycan is linked to Thr42. N-linked (GlcNAc...) asparagine glycosylation occurs at Asn51. Asn136 is a glycosylation site (N-linked (GlcNAc...) asparagine). Disordered regions lie at residues 162-371 (QPVP…KSHW) and 405-441 (SGAGPAGTGTPSLLRGKRGGHATNYRIVAPRSRDERG). 2 stretches are compositionally biased toward pro residues: residues 163–184 (PVPPTPATPEDPAPLWGPPPAQ) and 222–231 (PPGPQGPPGS). The 190-residue stretch at 179–368 (GPPPAQGSPG…PGPKGDPGEK (190 aa)) folds into the Collagen-like domain. Positions 232-243 (PGRAGAVGTPGE) are enriched in low complexity. The span at 244-264 (RGPPGPPGPPGPPGPPAPVGP) shows a compositional bias: pro residues. The span at 277-288 (LSNTFTETNNHW) shows a compositional bias: polar residues. A compositionally biased stretch (pro residues) spans 292–311 (PTGPPGPPGPMGPPGPPGPT). 2 stretches are compositionally biased toward basic and acidic residues: residues 335–344 (PGEKGERGLR) and 359–371 (PGPKGDPGEKSHW).

In terms of assembly, homo- or heteromers. O-fucosylated at Thr-42 within the EMI domain by FUT10/POFUT3 and FUT11/POFUT4.

The protein localises to the secreted. It localises to the extracellular space. Its subcellular location is the extracellular matrix. The sequence is that of EMI domain-containing protein 1 (EMID1) from Homo sapiens (Human).